Reading from the N-terminus, the 132-residue chain is Small ribosomal subunit protein bS6 (132 aa).

Residues 94 to 132 are disordered; the sequence is DAVTEESQLAKNADEKRARKATTRRPDRDDSDDNDHSED. Residues 122-132 show a composition bias toward acidic residues; the sequence is DDSDDNDHSED.

This sequence belongs to the bacterial ribosomal protein bS6 family.

Its function is as follows. Binds together with bS18 to 16S ribosomal RNA. The chain is Small ribosomal subunit protein bS6 from Psychrobacter arcticus (strain DSM 17307 / VKM B-2377 / 273-4).